The following is a 34-amino-acid chain: Protein HRURF (34 aa).

Functionally, may function as an inhibitory translational control element that can negatively regulate protein translation of HR gene. The protein is Protein HRURF of Homo sapiens (Human).